A 253-amino-acid polypeptide reads, in one-letter code: Imidazole glycerol phosphate synthase subunit HisF (253 aa).

Active-site residues include aspartate 11 and aspartate 130.

This sequence belongs to the HisA/HisF family. As to quaternary structure, heterodimer of HisH and HisF.

Its subcellular location is the cytoplasm. The catalysed reaction is 5-[(5-phospho-1-deoxy-D-ribulos-1-ylimino)methylamino]-1-(5-phospho-beta-D-ribosyl)imidazole-4-carboxamide + L-glutamine = D-erythro-1-(imidazol-4-yl)glycerol 3-phosphate + 5-amino-1-(5-phospho-beta-D-ribosyl)imidazole-4-carboxamide + L-glutamate + H(+). It participates in amino-acid biosynthesis; L-histidine biosynthesis; L-histidine from 5-phospho-alpha-D-ribose 1-diphosphate: step 5/9. Its function is as follows. IGPS catalyzes the conversion of PRFAR and glutamine to IGP, AICAR and glutamate. The HisF subunit catalyzes the cyclization activity that produces IGP and AICAR from PRFAR using the ammonia provided by the HisH subunit. The protein is Imidazole glycerol phosphate synthase subunit HisF of Opitutus terrae (strain DSM 11246 / JCM 15787 / PB90-1).